The primary structure comprises 607 residues: Transporter aclS (607 aa).

12 helical membrane passes run 67 to 87, 91 to 111, 152 to 172, 192 to 212, 221 to 241, 262 to 282, 317 to 337, 364 to 384, 423 to 443, 445 to 465, 500 to 520, and 531 to 551; these read LGGS…AVVL, IAAI…IGFP, LTVV…TAIL, VTTQ…PVLY, LMIG…IWSL, SLGF…SIAL, VFGQ…FGCL, AAAV…NVVD, GCYV…LASA, TFVS…GIHI, GVLP…HSIN, and HLYA…HTLV. Positions 583 to 607 are disordered; it reads NKDSTEEDSDRSLRRESREVVETKV. Over residues 592–607 the composition is skewed to basic and acidic residues; sequence DRSLRRESREVVETKV.

This sequence belongs to the purine-cytosine permease (2.A.39) family.

It localises to the membrane. In terms of biological role, transporter; part of the gene cluster that mediates the biosynthesis of aspirochlorine (or antibiotic A30641), an unusual halogenated spiro compound with distinctive antifungal properties due to selective inhibition of protein biosynthesis, and which is also active against bacteria, viruses, and murine tumor cells. The chain is Transporter aclS from Aspergillus oryzae (strain ATCC 42149 / RIB 40) (Yellow koji mold).